Consider the following 440-residue polypeptide: Glycerol-3-phosphate dehydrogenase [NAD(+)], chloroplastic (440 aa).

Residues 1–47 constitute a chloroplast transit peptide; it reads MAAAAAATFLPHTPTPRRRLAVAVHSPTRRRLSLVFSGPPDGALSVA. A disordered region spans residues 57–76; that stretch reads EEAAAAVSAPRGGGGGGGKE. Residues 114–119, Phe191, Lys214, and Ala248 each bind NAD(+); that span reads GGGSFG. Position 214 (Lys214) interacts with substrate. Lys299 serves as the catalytic Proton acceptor. NAD(+) contacts are provided by Arg363 and Glu389. Position 363–364 (363–364) interacts with substrate; that stretch reads RN.

The protein belongs to the NAD-dependent glycerol-3-phosphate dehydrogenase family.

The protein resides in the plastid. The protein localises to the chloroplast. It carries out the reaction sn-glycerol 3-phosphate + NAD(+) = dihydroxyacetone phosphate + NADH + H(+). It functions in the pathway membrane lipid metabolism; glycerophospholipid metabolism. In terms of biological role, required to supply glycerol-3-phosphate in the chloroplast for the synthesis of glycerolipids. In Oryza sativa subsp. japonica (Rice), this protein is Glycerol-3-phosphate dehydrogenase [NAD(+)], chloroplastic.